Consider the following 467-residue polypeptide: ADP-dependent glucose/glucosamine kinase (467 aa).

The ADPK domain occupies 10-467 (RLWKRLYVNA…FVSEFGMRKR (458 aa)). D-glucose is bound by residues aspartate 42, glutamate 96, glycine 120, 120–121 (GQ), histidine 184, and aspartate 211. Glutamate 279 contacts Mg(2+). Asparagine 305 contacts ADP. Glutamate 308 provides a ligand contact to Mg(2+). ADP contacts are provided by residues 352 to 353 (HT), valine 440, and glycine 450. Aspartate 451 contacts D-glucose. Aspartate 451 is a Mg(2+) binding site. The Proton acceptor role is filled by aspartate 451.

It belongs to the ADP-dependent glucokinase family. Monomer. The cofactor is Mg(2+).

The protein localises to the cytoplasm. It carries out the reaction D-glucose + ADP = D-glucose 6-phosphate + AMP + H(+). It catalyses the reaction D-glucosamine + ADP = D-glucosamine 6-phosphate + AMP + H(+). Its pathway is carbohydrate degradation; glycolysis. Catalyzes the ADP-dependent phosphorylation of D-glucose to D-glucose 6-phosphate and glucosamine to glucosamine 6-phosphate. Can also use CDP as the phosphoryl group donor and D-1,5-anhydroglucitol as the phosphoryl group acceptor. The sequence is that of ADP-dependent glucose/glucosamine kinase from Thermococcus litoralis (strain ATCC 51850 / DSM 5473 / JCM 8560 / NS-C).